Reading from the N-terminus, the 543-residue chain is Ribosomal protein arginine N-methyltransferase rmt3 (543 aa).

The C2H2-type zinc finger occupies 58–81 (FCCLFCDSTFTCLKDLWSHCKEAH). In terms of domain architecture, SAM-dependent MTase PRMT-type spans 217 to 543 (DSYYFESYAG…KADSQSYVLN (327 aa)). Residues Arg-239, Gly-263, Asp-285, Ser-287, Ile-313, and Glu-314 each coordinate S-adenosyl-L-homocysteine. Active-site residues include Glu-329 and Glu-338.

This sequence belongs to the class I-like SAM-binding methyltransferase superfamily. Protein arginine N-methyltransferase family. In terms of assembly, interacts with ef1a-c, rps2 and rps24. Note=Associates with the 40S ribosomal particle.

Its subcellular location is the cytoplasm. The protein resides in the cytosol. It catalyses the reaction L-arginyl-[protein] + S-adenosyl-L-methionine = N(omega)-methyl-L-arginyl-[protein] + S-adenosyl-L-homocysteine + H(+). The enzyme catalyses L-arginyl-[protein] + 2 S-adenosyl-L-methionine = N(omega),N(omega)-dimethyl-L-arginyl-[protein] + 2 S-adenosyl-L-homocysteine + 2 H(+). Methylates (mono and asymmetric dimethylation) the guanidino nitrogens of arginyl residues in ribosomal protein rps2. The chain is Ribosomal protein arginine N-methyltransferase rmt3 (rmt3) from Schizosaccharomyces pombe (strain 972 / ATCC 24843) (Fission yeast).